The following is a 466-amino-acid chain: Glutamate--tRNA ligase (466 aa).

The 'HIGH' region signature appears at 11-21 (PSPTGFIHLGN). Residues 243–247 (KMSKR) carry the 'KMSKS' region motif. ATP is bound at residue Lys-246.

The protein belongs to the class-I aminoacyl-tRNA synthetase family. Glutamate--tRNA ligase type 1 subfamily. Monomer.

The protein resides in the cytoplasm. The catalysed reaction is tRNA(Glu) + L-glutamate + ATP = L-glutamyl-tRNA(Glu) + AMP + diphosphate. Its function is as follows. Catalyzes the attachment of glutamate to tRNA(Glu) in a two-step reaction: glutamate is first activated by ATP to form Glu-AMP and then transferred to the acceptor end of tRNA(Glu). The protein is Glutamate--tRNA ligase of Cupriavidus necator (strain ATCC 17699 / DSM 428 / KCTC 22496 / NCIMB 10442 / H16 / Stanier 337) (Ralstonia eutropha).